Here is a 416-residue protein sequence, read N- to C-terminus: Gamma-glutamyl phosphate reductase (416 aa).

It belongs to the gamma-glutamyl phosphate reductase family.

Its subcellular location is the cytoplasm. The catalysed reaction is L-glutamate 5-semialdehyde + phosphate + NADP(+) = L-glutamyl 5-phosphate + NADPH + H(+). It participates in amino-acid biosynthesis; L-proline biosynthesis; L-glutamate 5-semialdehyde from L-glutamate: step 2/2. Functionally, catalyzes the NADPH-dependent reduction of L-glutamate 5-phosphate into L-glutamate 5-semialdehyde and phosphate. The product spontaneously undergoes cyclization to form 1-pyrroline-5-carboxylate. The chain is Gamma-glutamyl phosphate reductase from Streptococcus pyogenes serotype M49 (strain NZ131).